A 151-amino-acid polypeptide reads, in one-letter code: Extracellular globin-4 (151 aa).

Positions 6–151 (CCSYEDRREI…LVARIAKDLP (146 aa)) constitute a Globin domain. The cysteines at positions 7 and 138 are disulfide-linked. His101 provides a ligand contact to heme b.

It belongs to the globin family. In terms of assembly, the extracellular hemoglobin of the earthworm consists of 12 subunits that have a hexagonal bilayer structure with a molecular weight near 3.8 million. Each one-twelfth subunit is composed primarily of disulfide linked trimers (chains A, B, and C) and monomers (chain D).

Its subcellular location is the secreted. In Lumbricus terrestris (Common earthworm), this protein is Extracellular globin-4.